The following is a 332-amino-acid chain: Alpha-N-acetylgalactosaminide alpha-2,6-sialyltransferase 6 (332 aa).

The tract at residues 1–26 (MACPRPLSQCDHTPLPGPPAGHWPLP) is disordered. Residues 1–42 (MACPRPLSQCDHTPLPGPPAGHWPLPLSRRRREMKSNKEQRS) lie on the Cytoplasmic side of the membrane. Residues 43–63 (AVFVILFALITILILYSSSSA) form a helical; Signal-anchor for type II membrane protein membrane-spanning segment. The Lumenal segment spans residues 64 to 332 (NEVFHYGSLR…GITFSHPSWT (269 aa)). N-linked (GlcNAc...) asparagine glycosylation is present at N97. A disulfide bond links C107 and C255.

The protein belongs to the glycosyltransferase 29 family.

Its subcellular location is the golgi apparatus membrane. It catalyses the reaction a ganglioside GM1b (d18:1(4E)) + CMP-N-acetyl-beta-neuraminate = a ganglioside GD1alpha (d18:1(4E)) + CMP + H(+). The enzyme catalyses N-acetyl-alpha-neuraminosyl-(2-&gt;3)-beta-D-galactosyl-(1-&gt;3)-N-acetyl-beta-D-glucosaminyl-(1-&gt;3)-beta-D-galactosyl-(1-&gt;4)-beta-D-glucosyl-(1&lt;-&gt;1')-N-acyl-sphing-4-enine + CMP-N-acetyl-beta-neuraminate = N-acetyl-alpha-neuraminosyl-(2-&gt;3)-beta-D-galactosyl-(1-&gt;3)-[N-acetyl-alpha-neuraminosyl-(2-&gt;6)]-N-acetyl-beta-D-glucosaminyl-(1-&gt;3)-beta-D-galactosyl-(1-&gt;4)-beta-D-glucosyl-(1&lt;-&gt;1')-N-acyl-sphing-4-enine + CMP + H(+). It carries out the reaction a globoside MSGG + CMP-N-acetyl-beta-neuraminate = a globoside DSGG + CMP + H(+). The catalysed reaction is a ganglioside GD1a (d18:1(4E)) + CMP-N-acetyl-beta-neuraminate = a ganglioside GT1aalpha (d18:1(4E)) + CMP + H(+). It catalyses the reaction a ganglioside GT1b (d18:1(4E)) + CMP-N-acetyl-beta-neuraminate = a ganglioside GQ1balpha (d18:1(4E)) + CMP + H(+). The enzyme catalyses 3-O-[alpha-Neu5Ac-(2-&gt;3)-beta-D-Gal-(1-&gt;3)-alpha-D-GalNAc]-L-Ser-[protein] + CMP-N-acetyl-beta-neuraminate = a 3-O-{alpha-Neu5Ac-(2-&gt;3)-beta-D-Gal-(1-&gt;3)-[alpha-Neu5Ac-(2-&gt;6)]-alpha-D-GalNAc}-L-seryl-[protein] + CMP + H(+). It carries out the reaction 3-O-[alpha-Neu5Ac-(2-&gt;3)-beta-D-Gal-(1-&gt;3)-alpha-D-GalNAc]-L-Thr-[protein] + CMP-N-acetyl-beta-neuraminate = a 3-O-{alpha-Neu5Ac-(2-&gt;3)-beta-D-Gal-(1-&gt;3)-[alpha-Neu5Ac-(2-&gt;6)]-alpha-D-GalNAc}-L-threonyl-[protein] + CMP + H(+). Its function is as follows. Transfers the sialyl group (N-acetyl-alpha-neuraminyl or NeuAc) from CMP-NeuAc onto glycoproteins and glycolipids, forming an alpha-2,6-linkage. Produces branched type disialyl structures by transfer of a sialyl group onto the GalNAc or GlcNAc residue inside backbone core chains having a terminal sialic acid with an alpha-2,3-linkage on Gal. ST6GalNAcVI prefers glycolipids to glycoproteins, predominantly catalyzing the biosynthesis of ganglioside GD1alpha from GM1b. Besides GMb1, MSGG and other glycolipids, it shows activity towards sialyl Lc4Cer generating disialyl Lc4Cer, which can lead to the synthesis of disialyl Lewis a (Le(a)), suggested to be a cancer-associated antigen. Also has activity toward GD1a and GT1b, and can generate DSGG (disialylgalactosylgloboside) from MSGG (monosialylgalactosylgloboside). This chain is Alpha-N-acetylgalactosaminide alpha-2,6-sialyltransferase 6 (ST6GALNAC6), found in Bos taurus (Bovine).